The chain runs to 499 residues: Tetrathionate hydrolase (499 aa).

The N-terminal stretch at 1-32 (MPSIVRNHGPHNKILLSALLLALFGWVPLASA) is a signal peptide.

It belongs to the tetrathionate hydrolase family. Homodimer.

It localises to the cell membrane. The enzyme catalyses tetrathionate + H2O = sulfur + thiosulfate + sulfate + H(+). Its function is as follows. Catalyzes the hydrolysis of tetrathionate to generate elemental sulfur, thiosulfate and sulfate. The polypeptide is Tetrathionate hydrolase (Acidithiobacillus ferrooxidans (strain ATCC 23270 / DSM 14882 / CIP 104768 / NCIMB 8455) (Ferrobacillus ferrooxidans (strain ATCC 23270))).